The chain runs to 146 residues: Copper transporter 5 (146 aa).

The chain crosses the membrane as a helical span at residues 24–44 (WLSYILTLIACFVFSAFYQYL). Residues 55–74 (SSSRRAPPPPRSSSGVSAPL) are disordered. A helical membrane pass occupies residues 101 to 121 (LLMLAAMSFNGGVFIAIVVGL).

This sequence belongs to the copper transporter (Ctr) (TC 1.A.56) family. SLC31A subfamily. In terms of tissue distribution, highly expressed in leaves and stems and at lower levels in roots and flowers.

The protein localises to the membrane. In terms of biological role, involved in the transport of copper. The chain is Copper transporter 5 (COPT5) from Arabidopsis thaliana (Mouse-ear cress).